The chain runs to 513 residues: MEKLERYSEKRKSRQQYFVYPLLFQEYIYAFAHDYALKGFEPVEIVGYNNKKFSSLLVKRLIIRMYQQNFWINSVNHPNQDRLLDHSNHFYSKFYSQILSEGFAIVLEIPFSLGELSCPGEKEIPKFQNLQSIHSIFPFLEEKFLHLHYLSHIEIPYPIHFEILVQLLEYRIQDVPSLHLLRFFLNYYSNWNSLITSMKSIFLLKKENKRLFRFLYNSYVSEYEFFLLFLRKQSSSLRLISSGTFLERIHFSMKMEHFGVMYPRFFQKTLWFFMDPLMHYVRYQGKAILASKGTLLLKKKWKSYLVNFSQYFLSFWTQPQRIRLNQLRNSCFDFLGYRSSVPINTFLVRNQMLENFFLIDTRMKKLDTTAPATPLIGSLSKAQFCTGLGHPISKPIWTDLSDWDILDRFGRICRNLFHYHSGSSKKQALYQLKYILRLSCARTLARKHKSTVRTFMQRLGSVFLEEFFTEEEQVFSLMFAKTTHFSFHGSHSERIWYFDIIRIDDLVNPLTLN.

Belongs to the intron maturase 2 family. MatK subfamily.

The protein resides in the plastid. It is found in the chloroplast. Functionally, usually encoded in the trnK tRNA gene intron. Probably assists in splicing its own and other chloroplast group II introns. The polypeptide is Maturase K (Sporobolus indicus (Smut grass)).